We begin with the raw amino-acid sequence, 137 residues long: Small ribosomal subunit protein uS11 (137 aa).

Positions 116–137 (EDVTPIPHDGTRPKGGRRGRRV) are disordered.

The protein belongs to the universal ribosomal protein uS11 family. Part of the 30S ribosomal subunit.

Functionally, located on the platform of the 30S subunit. The chain is Small ribosomal subunit protein uS11 from Pyrococcus abyssi (strain GE5 / Orsay).